The following is a 384-amino-acid chain: Substance-K receptor (384 aa).

At 1-32 (MGAHAIVTDANISSSLENNTTGITAFSMPGWQ) the chain is on the extracellular side. N-linked (GlcNAc...) asparagine glycosylation is found at asparagine 11, asparagine 18, and asparagine 19. Residues 33 to 56 (LALWATAYLVLVLVAVTGNATVIW) traverse the membrane as a helical segment. Over 57–69 (IILAHQRMRTVTN) the chain is Cytoplasmic. A helical membrane pass occupies residues 70 to 90 (YFIVNLALADLCMAAFNAAFN). The Extracellular segment spans residues 91-107 (FVYASHNIWYFGRAFCH). Cysteine 106 and cysteine 181 are oxidised to a cystine. A helical membrane pass occupies residues 108–129 (FQNLFPITAMFVSIYSMTAIAA). The Cytoplasmic segment spans residues 130-149 (DRYVAIVHPFQPRLSAPGTR). The helical transmembrane segment at 150-170 (AVIAGIWLLALALAFPQCFYS) threads the bilayer. Over 171–196 (TITMDQGATKCVVVWPEDNGSKMLLL) the chain is Extracellular. A helical membrane pass occupies residues 197-218 (YHLVVIALIYVLPLLVMLLAYS). Residues 219-251 (VIGLTLWRREVPRHQVHGASLRHLRAKKKFVKT) are Cytoplasmic-facing. The chain crosses the membrane as a helical span at residues 252–272 (MVLVVVTFAICWLPYHFYFIL). Over 273–290 (GSFQEDIYYHKFIQQVYL) the chain is Extracellular. A helical transmembrane segment spans residues 291–310 (ALFWLAMSSTMYNPIIYCCL). Over 311 to 384 (NHRFRSGFRL…GPQDGLPDEP (74 aa)) the chain is Cytoplasmic. Cysteine 324 carries the S-palmitoyl cysteine lipid modification.

The protein belongs to the G-protein coupled receptor 1 family.

It localises to the cell membrane. Functionally, this is a receptor for the tachykinin neuropeptide substance K (neurokinin A). It is associated with G proteins that activate a phosphatidylinositol-calcium second messenger system. This chain is Substance-K receptor (TACR2), found in Canis lupus familiaris (Dog).